The primary structure comprises 321 residues: Diguanylate cyclase (321 aa).

Residues 28-98 (QFSLHELVLN…AADQQVFETR (71 aa)) enclose the PAS domain. Residues 102 to 155 (VHEERAIAKSNGLVRIYRAVKHPILHRVTGEVIGLIGVSTDITDIVELREQLYQ) form the PAC domain. Residues 187–318 (QPLSCISIDI…GRNRCCIYRQ (132 aa)) form the GGDEF domain. 3 residues coordinate Mg(2+): Asp-195, Ile-196, and Glu-238. Glu-238 serves as the catalytic Proton acceptor.

The cofactor is Mg(2+).

The catalysed reaction is 2 GTP = 3',3'-c-di-GMP + 2 diphosphate. In terms of biological role, involved in biofilm formation. Catalyzes the conversion of GTP to c-di-GMP. The chain is Diguanylate cyclase from Vibrio cholerae serotype O1 (strain ATCC 39541 / Classical Ogawa 395 / O395).